The chain runs to 1023 residues: Lon protease homolog (1023 aa).

515-522 (GPPGVGKT) contacts ATP. The Lon proteolytic domain occupies 810 to 1003 (TNMIGVINGL…IEIITDPNVI (194 aa)). Residue serine 906 is part of the active site.

Belongs to the peptidase S16 family.

The chain is Lon protease homolog from Acanthamoeba polyphaga (Amoeba).